The following is a 158-amino-acid chain: 2-C-methyl-D-erythritol 2,4-cyclodiphosphate synthase (158 aa).

A divalent metal cation is bound by residues aspartate 9 and histidine 11. Residues aspartate 9–histidine 11 and histidine 35–serine 36 each bind 4-CDP-2-C-methyl-D-erythritol 2-phosphate. Histidine 43 lines the a divalent metal cation pocket. 4-CDP-2-C-methyl-D-erythritol 2-phosphate-binding positions include aspartate 57–glycine 59, phenylalanine 62–aspartate 66, threonine 133–glutamate 136, phenylalanine 140, and arginine 143.

Belongs to the IspF family. In terms of assembly, homotrimer. It depends on a divalent metal cation as a cofactor.

The catalysed reaction is 4-CDP-2-C-methyl-D-erythritol 2-phosphate = 2-C-methyl-D-erythritol 2,4-cyclic diphosphate + CMP. It participates in isoprenoid biosynthesis; isopentenyl diphosphate biosynthesis via DXP pathway; isopentenyl diphosphate from 1-deoxy-D-xylulose 5-phosphate: step 4/6. In terms of biological role, involved in the biosynthesis of isopentenyl diphosphate (IPP) and dimethylallyl diphosphate (DMAPP), two major building blocks of isoprenoid compounds. Catalyzes the conversion of 4-diphosphocytidyl-2-C-methyl-D-erythritol 2-phosphate (CDP-ME2P) to 2-C-methyl-D-erythritol 2,4-cyclodiphosphate (ME-CPP) with a corresponding release of cytidine 5-monophosphate (CMP). This chain is 2-C-methyl-D-erythritol 2,4-cyclodiphosphate synthase, found in Actinobacillus pleuropneumoniae serotype 5b (strain L20).